Here is a 247-residue protein sequence, read N- to C-terminus: ATP synthase subunit a, chloroplastic (247 aa).

Transmembrane regions (helical) follow at residues 38-58 (QVLI…VIAV), 95-115 (VPFI…GALL), 134-154 (INTT…AGLS), 199-219 (LVVV…VMFL), and 220-240 (GLFT…AYIG).

The protein belongs to the ATPase A chain family. F-type ATPases have 2 components, CF(1) - the catalytic core - and CF(0) - the membrane proton channel. CF(1) has five subunits: alpha(3), beta(3), gamma(1), delta(1), epsilon(1). CF(0) has four main subunits: a, b, b' and c.

Its subcellular location is the plastid. The protein localises to the chloroplast thylakoid membrane. Functionally, key component of the proton channel; it plays a direct role in the translocation of protons across the membrane. The chain is ATP synthase subunit a, chloroplastic from Hordeum vulgare (Barley).